Reading from the N-terminus, the 552-residue chain is MASQTQLRLIIYEFTRKIQTRLNTQKLHSFVTKSKLARDPYFATQLARFYALNDDLISARKLFDVFPERSVFLWNSIIRAYAKAHQFTTVLSLFSQILRSDTRPDNFTYACLARGFSESFDTKGLRCIHGIAIVSGLGFDQICGSAIVKAYSKAGLIVEASKLFCSIPDPDLALWNVMILGYGCCGFWDKGINLFNLMQHRGHQPNCYTMVALTSGLIDPSLLLVAWSVHAFCLKINLDSHSYVGCALVNMYSRCMCIASACSVFNSISEPDLVACSSLITGYSRCGNHKEALHLFAELRMSGKKPDCVLVAIVLGSCAELSDSVSGKEVHSYVIRLGLELDIKVCSALIDMYSKCGLLKCAMSLFAGIPEKNIVSFNSLILGLGLHGFASTAFEKFTEILEMGLIPDEITFSALLCTCCHSGLLNKGQEIFERMKSEFGIEPQTEHYVYMVKLMGMAGKLEEAFEFVMSLQKPIDSGILGALLSCCEVHENTHLAEVVAENIHKNGEERRSVYKVMLSNVYARYGRWDEVERLRDGISESYGGKLPGISWF.

13 PPR repeats span residues 39–69 (DPYF…FPER), 70–104 (SVFL…DTRP), 105–139 (DNFT…GLGF), 140–170 (DQIC…IPDP), 171–205 (DLAL…GHQP), 206–240 (NCYT…NLDS), 241–271 (HSYV…ISEP), 272–306 (DLVA…GKKP), 307–341 (DCVL…GLEL), 342–372 (DIKV…IPEK), 373–407 (NIVS…GLIP), 408–438 (DEIT…MKSE), and 444–474 (QTEH…LQKP). The interval 479 to 552 (ILGALLSCCE…GGKLPGISWF (74 aa)) is type E motif; degenerate.

This sequence belongs to the PPR family. PCMP-E subfamily.

The chain is Putative pentatricopeptide repeat-containing protein At1g64310 (PCMP-E65) from Arabidopsis thaliana (Mouse-ear cress).